The chain runs to 150 residues: 3-dehydroquinate dehydratase (150 aa).

The active-site Proton acceptor is Tyr-26. The substrate site is built by Asn-77, His-83, and Asp-90. His-103 acts as the Proton donor in catalysis. Substrate-binding positions include 104–105 (LS) and Arg-114.

Belongs to the type-II 3-dehydroquinase family. Homododecamer.

It carries out the reaction 3-dehydroquinate = 3-dehydroshikimate + H2O. It participates in metabolic intermediate biosynthesis; chorismate biosynthesis; chorismate from D-erythrose 4-phosphate and phosphoenolpyruvate: step 3/7. Its function is as follows. Catalyzes a trans-dehydration via an enolate intermediate. The polypeptide is 3-dehydroquinate dehydratase (Photorhabdus laumondii subsp. laumondii (strain DSM 15139 / CIP 105565 / TT01) (Photorhabdus luminescens subsp. laumondii)).